The following is a 383-amino-acid chain: Xylose/arabinose import ATP-binding protein XacJ (383 aa).

Positions 4 to 235 (IQLTDLTKRF…PNNLFVAEFI (232 aa)) constitute an ABC transporter domain. 36–43 (GPSGCGKS) provides a ligand contact to ATP.

The protein belongs to the ABC transporter superfamily. Carbohydrate uptake transporter-1 (CUT1) (TC 3.A.1.1) family. As to quaternary structure, the complex is composed of two ATP-binding proteins (XacJ and XacK), two transmembrane proteins (XacH and XacI) and a solute-binding protein (XacG).

Its subcellular location is the cell membrane. It carries out the reaction D-xylose(out) + ATP + H2O = D-xylose(in) + ADP + phosphate + H(+). The catalysed reaction is L-arabinose(out) + ATP + H2O = L-arabinose(in) + ADP + phosphate + H(+). In terms of biological role, part of the ABC transporter complex XacGHIJK involved in the uptake of xylose and arabinose. Responsible for energy coupling to the transport system. This is Xylose/arabinose import ATP-binding protein XacJ from Haloferax volcanii (strain ATCC 29605 / DSM 3757 / JCM 8879 / NBRC 14742 / NCIMB 2012 / VKM B-1768 / DS2) (Halobacterium volcanii).